The chain runs to 358 residues: Fructose-bisphosphate aldolase 7, cytosolic (358 aa).

S2 is subject to N-acetylserine. Residue R52 participates in substrate binding. An S-glutathionyl cysteine; transient modification is found at C68. K142 contributes to the substrate binding site. C173 carries the post-translational modification S-glutathionyl cysteine; transient; alternate. An S-nitrosocysteine; transient; alternate modification is found at C173. The active-site Proton acceptor is the E183. The active-site Schiff-base intermediate with dihydroxyacetone-P is the K225. Substrate is bound at residue 266–268 (SGI).

It belongs to the class I fructose-bisphosphate aldolase family. Homotetramer. In terms of processing, S-glutathionylated at Cys-68 and Cys-173. S-nitrosylated at Cys-173. As to expression, highly expressed in flowers, and at lower levels in rosettes leaves and cauline leaves.

The protein resides in the cytoplasm. It is found in the cytosol. The enzyme catalyses beta-D-fructose 1,6-bisphosphate = D-glyceraldehyde 3-phosphate + dihydroxyacetone phosphate. It functions in the pathway carbohydrate degradation; glycolysis; D-glyceraldehyde 3-phosphate and glycerone phosphate from D-glucose: step 4/4. Plays a key role in glycolysis and gluconeogenesis. This Arabidopsis thaliana (Mouse-ear cress) protein is Fructose-bisphosphate aldolase 7, cytosolic.